We begin with the raw amino-acid sequence, 525 residues long: Probable bifunctional tRNA threonylcarbamoyladenosine biosynthesis protein (525 aa).

The interval 1–322 (MPEKRVLGIE…FRSDQVEVTW (322 aa)) is kae1. Histidine 106, histidine 110, and tyrosine 127 together coordinate Fe cation. Residues 127–131 (YASGA), aspartate 159, glycine 172, glutamate 176, and asparagine 255 contribute to the L-threonylcarbamoyladenylate site. Fe cation is bound at residue aspartate 283. The region spanning 331-525 (APGQSETAER…HEIELRGRYL (195 aa)) is the Protein kinase domain. Residues 338–346 (AERGAEASV) and lysine 355 each bind ATP. Residue aspartate 442 is the Proton acceptor; for kinase activity of the active site.

The protein in the N-terminal section; belongs to the KAE1 / TsaD family. It in the C-terminal section; belongs to the protein kinase superfamily. Tyr protein kinase family. BUD32 subfamily. As to quaternary structure, component of the KEOPS complex that consists of Kae1, Bud32, Cgi121 and Pcc1; the whole complex dimerizes. Fe(2+) serves as cofactor.

The protein resides in the cytoplasm. It carries out the reaction L-seryl-[protein] + ATP = O-phospho-L-seryl-[protein] + ADP + H(+). The enzyme catalyses L-threonyl-[protein] + ATP = O-phospho-L-threonyl-[protein] + ADP + H(+). The catalysed reaction is L-threonylcarbamoyladenylate + adenosine(37) in tRNA = N(6)-L-threonylcarbamoyladenosine(37) in tRNA + AMP + H(+). Its function is as follows. Required for the formation of a threonylcarbamoyl group on adenosine at position 37 (t(6)A37) in tRNAs that read codons beginning with adenine. Is a component of the KEOPS complex that is probably involved in the transfer of the threonylcarbamoyl moiety of threonylcarbamoyl-AMP (TC-AMP) to the N6 group of A37. The Kae1 domain likely plays a direct catalytic role in this reaction. The Bud32 domain probably displays kinase activity that regulates Kae1 function. This chain is Probable bifunctional tRNA threonylcarbamoyladenosine biosynthesis protein, found in Methanocorpusculum labreanum (strain ATCC 43576 / DSM 4855 / Z).